Reading from the N-terminus, the 210-residue chain is Glutathione S-transferase P 1 (210 aa).

Residues 2–81 form the GST N-terminal domain; that stretch reads PPYTIVYFPV…HLGRSLGLYG (80 aa). Residue tyrosine 4 is modified to Phosphotyrosine; by EGFR. Residues tyrosine 8, arginine 14, tryptophan 39, lysine 45, and 52-53 each bind glutathione; that span reads QL. At threonine 62 the chain carries Phosphothreonine. 65–66 serves as a coordination point for glutathione; sequence QS. A GST C-terminal domain is found at 83 to 204; that stretch reads NQREAAQMDM…SSPEHVNRPI (122 aa). An N6-succinyllysine mark is found at lysine 103 and lysine 116. Lysine 128 carries the post-translational modification N6-acetyllysine.

As to quaternary structure, homodimer. Interacts with CDK5. As to expression, ubiquitously expressed.

The protein resides in the cytoplasm. Its subcellular location is the mitochondrion. It is found in the nucleus. It carries out the reaction RX + glutathione = an S-substituted glutathione + a halide anion + H(+). The enzyme catalyses prostaglandin J2 + glutathione = prostaglandin J2-S-(R)-glutathione. It catalyses the reaction prostaglandin J2 + glutathione = prostaglandin J2-S-(S)-glutathione. The catalysed reaction is prostaglandin A2 + glutathione = prostaglandin A2-S-(S)-glutathione. It carries out the reaction 11(S)-hydroxy-14(S),15(S)-epoxy-(5Z,8Z,12E)-eicosatrienoate + glutathione = (11S,15S)-dihydroxy-14(R)-S-glutathionyl-(5Z,8Z,12E)-eicosatrienoate. Functionally, conjugation of reduced glutathione to a wide number of exogenous and endogenous hydrophobic electrophiles. Involved in the formation of glutathione conjugates of both prostaglandin A2 (PGA2) and prostaglandin J2 (PGJ2). Participates in the formation of novel hepoxilin regioisomers. Negatively regulates CDK5 activity via p25/p35 translocation to prevent neurodegeneration. The polypeptide is Glutathione S-transferase P 1 (Mus musculus (Mouse)).